A 104-amino-acid chain; its full sequence is Gastrin (104 aa).

Residues 1–21 form the signal peptide; that stretch reads MQRLCVCVLILALALTAFSEA. The tract at residues 22–49 is disordered; it reads SWKPRSQLQDAPSGPGANGGLEPHWLNR. Residues 22-58 constitute a propeptide that is removed on maturation; it reads SWKPRSQLQDAPSGPGANGGLEPHWLNRLGPASHHRW. A pyrrolidone carboxylic acid mark is found at Gln59 and Gln76. A Sulfotyrosine modification is found at Tyr87. At Phe92 the chain carries Phenylalanine amide. At Ser96 the chain carries Phosphoserine. The propeptide occupies 96 to 104; the sequence is SAEDGDQHP.

This sequence belongs to the gastrin/cholecystokinin family.

Its subcellular location is the secreted. In terms of biological role, gastrin stimulates the stomach mucosa to produce and secrete hydrochloric acid and the pancreas to secrete its digestive enzymes. It also stimulates smooth muscle contraction and increases blood circulation and water secretion in the stomach and intestine. The sequence is that of Gastrin (GAST) from Felis catus (Cat).